Consider the following 112-residue polypeptide: Putative pterin-4-alpha-carbinolamine dehydratase (112 aa).

The protein belongs to the pterin-4-alpha-carbinolamine dehydratase family.

The enzyme catalyses (4aS,6R)-4a-hydroxy-L-erythro-5,6,7,8-tetrahydrobiopterin = (6R)-L-erythro-6,7-dihydrobiopterin + H2O. This chain is Putative pterin-4-alpha-carbinolamine dehydratase, found in Shewanella pealeana (strain ATCC 700345 / ANG-SQ1).